We begin with the raw amino-acid sequence, 292 residues long: UDP-3-O-acyl-N-acetylglucosamine deacetylase (292 aa).

3 residues coordinate Zn(2+): histidine 75, histidine 231, and aspartate 235. The active-site Proton donor is histidine 258.

This sequence belongs to the LpxC family. Requires Zn(2+) as cofactor.

The catalysed reaction is a UDP-3-O-[(3R)-3-hydroxyacyl]-N-acetyl-alpha-D-glucosamine + H2O = a UDP-3-O-[(3R)-3-hydroxyacyl]-alpha-D-glucosamine + acetate. It participates in glycolipid biosynthesis; lipid IV(A) biosynthesis; lipid IV(A) from (3R)-3-hydroxytetradecanoyl-[acyl-carrier-protein] and UDP-N-acetyl-alpha-D-glucosamine: step 2/6. Its function is as follows. Catalyzes the hydrolysis of UDP-3-O-myristoyl-N-acetylglucosamine to form UDP-3-O-myristoylglucosamine and acetate, the committed step in lipid A biosynthesis. The polypeptide is UDP-3-O-acyl-N-acetylglucosamine deacetylase (Nautilia profundicola (strain ATCC BAA-1463 / DSM 18972 / AmH)).